Consider the following 69-residue polypeptide: Large ribosomal subunit protein uL29 (69 aa).

It belongs to the universal ribosomal protein uL29 family.

The polypeptide is Large ribosomal subunit protein uL29 (Clostridium perfringens (strain ATCC 13124 / DSM 756 / JCM 1290 / NCIMB 6125 / NCTC 8237 / Type A)).